Reading from the N-terminus, the 232-residue chain is Large ribosomal subunit protein uL1 (232 aa).

Belongs to the universal ribosomal protein uL1 family. As to quaternary structure, part of the 50S ribosomal subunit.

Its function is as follows. Binds directly to 23S rRNA. The L1 stalk is quite mobile in the ribosome, and is involved in E site tRNA release. In terms of biological role, protein L1 is also a translational repressor protein, it controls the translation of the L11 operon by binding to its mRNA. The chain is Large ribosomal subunit protein uL1 from Paraburkholderia phymatum (strain DSM 17167 / CIP 108236 / LMG 21445 / STM815) (Burkholderia phymatum).